The sequence spans 439 residues: SET domain-containing protein 4 (439 aa).

Positions 1 to 19 are enriched in basic residues; it reads MQRRRGRTERARKRRRRSS. Residues 1 to 25 are disordered; that stretch reads MQRRRGRTERARKRRRRSSGSRAVN. An SET domain is found at 47 to 272; sequence TDLVPASFPG…KHQEVFICYG (226 aa). Tyrosine 271 contacts S-adenosyl-L-methionine.

The protein belongs to the class V-like SAM-binding methyltransferase superfamily. SETD4 family. As to quaternary structure, forms a ternary complex with TBK1 and ZNF268; the interaction with TBK1 is ZNF268-dependent and leads to TBK1 monomethylation. In terms of tissue distribution, expressed in the forebrain subventricular zone, in quiescent neural stem cells.

The protein resides in the cytoplasm. Its subcellular location is the cytosol. The protein localises to the nucleus. It catalyses the reaction L-lysyl(4)-[histone H3] + S-adenosyl-L-methionine = N(6)-methyl-L-lysyl(4)-[histone H3] + S-adenosyl-L-homocysteine + H(+). It carries out the reaction N(6)-methyl-L-lysyl(4)-[histone H3] + S-adenosyl-L-methionine = N(6),N(6)-dimethyl-L-lysyl(4)-[histone H3] + S-adenosyl-L-homocysteine + H(+). The catalysed reaction is L-lysyl(20)-[histone H4] + S-adenosyl-L-methionine = N(6)-methyl-L-lysyl(20)-[histone H4] + S-adenosyl-L-homocysteine + H(+). The enzyme catalyses N(6)-methyl-L-lysyl(20)-[histone H4] + S-adenosyl-L-methionine = N(6),N(6)-dimethyl-L-lysyl(20)-[histone H4] + S-adenosyl-L-homocysteine + H(+). It catalyses the reaction N(6),N(6)-dimethyl-L-lysyl(20)-[histone H4] + S-adenosyl-L-methionine = N(6),N(6),N(6)-trimethyl-L-lysyl(20)-[histone H4] + S-adenosyl-L-homocysteine + H(+). It carries out the reaction L-lysyl-[protein] + S-adenosyl-L-methionine = N(6)-methyl-L-lysyl-[protein] + S-adenosyl-L-homocysteine + H(+). In terms of biological role, protein-lysine N-methyltransferase that methylates both histones and non-histone proteins. Via its catalytic activity, regulates many processes, including cell proliferation, cell differentiation, inflammatory response and apoptosis. Regulates the inflammatory response by mediating mono- and dimethylation of 'Lys-4' of histone H3 (H3K4me1 and H3K4me2, respectively), leading to activate the transcription of pro-inflammatory cytokines IL6 and TNF-alpha. Also involved in the regulation of stem cell quiescence by catalyzing the trimethylation of 'Lys-20' of histone H4 (H4K20me3), thereby promoting heterochromatin formation. In the brain, epigenetically controls quiescence of neural stem cells for sustaining a protected neural stem cell population and maintaining a stem cell reservoir for neurogenesis. Involved in proliferation, migration, paracrine and myogenic differentiation of bone marrow mesenchymal stem cells (BMSCs). Through the catalysis of XRCC5/Ku70 trimethylation, regulates BAX-mediated apoptosis. SETD4-catalyzed XRCC5 methylation results in XRCC5 translocation to the cytoplasm, where it interacts with BAX, sequestering it from the mitochondria, hence preventing BAX-mediated apoptosis. This is SET domain-containing protein 4 from Mus musculus (Mouse).